The following is a 350-amino-acid chain: MPVLHNRISNEELKARMLAETEPRTTVSFYKYFILEDAKAFRDNLYSQFVKLGVFGRVYVAKEGINAQISVPANRYDEFKVVLFAAHPALDQVRLNVAHEDDGKSFWVLRMKVRERIVADGIDDDSFDPSNVGHYLKADQVNQMIDDPDTLFVDMRNHYEYEVGHFENAIEVPSDTFREQLPMAVDMLQHDKEKNIVMYCTGGIRCEKASAYMLHNGFKNVFHVEGGIIEYARKAKEQGLPLKFIGKNFVFDERMGERISEDVIAHCHQCGTPSDTHTNCKNDGCHLLFIQCPACAAKFEGCCSPICQEELKLPQEEQRARRAGRENGIKIFNKSKGLLQTTMHIPMPDK.

Residues 146–240 (DDPDTLFVDM…YARKAKEQGL (95 aa)) form the Rhodanese domain. The Cysteine persulfide intermediate role is filled by Cys200.

It belongs to the TrhO family.

The enzyme catalyses uridine(34) in tRNA + AH2 + O2 = 5-hydroxyuridine(34) in tRNA + A + H2O. In terms of biological role, catalyzes oxygen-dependent 5-hydroxyuridine (ho5U) modification at position 34 in tRNAs. The protein is tRNA uridine(34) hydroxylase of Yersinia enterocolitica serotype O:8 / biotype 1B (strain NCTC 13174 / 8081).